A 118-amino-acid polypeptide reads, in one-letter code: Ribonuclease P protein component (118 aa).

The protein belongs to the RnpA family. As to quaternary structure, consists of a catalytic RNA component (M1 or rnpB) and a protein subunit.

The catalysed reaction is Endonucleolytic cleavage of RNA, removing 5'-extranucleotides from tRNA precursor.. In terms of biological role, RNaseP catalyzes the removal of the 5'-leader sequence from pre-tRNA to produce the mature 5'-terminus. It can also cleave other RNA substrates such as 4.5S RNA. The protein component plays an auxiliary but essential role in vivo by binding to the 5'-leader sequence and broadening the substrate specificity of the ribozyme. In Shewanella denitrificans (strain OS217 / ATCC BAA-1090 / DSM 15013), this protein is Ribonuclease P protein component.